The chain runs to 302 residues: tRNA dimethylallyltransferase (302 aa).

21 to 28 provides a ligand contact to ATP; that stretch reads GPTASGKS. Position 23 to 28 (23 to 28) interacts with substrate; that stretch reads TASGKS.

Belongs to the IPP transferase family. In terms of assembly, monomer. Mg(2+) serves as cofactor.

The enzyme catalyses adenosine(37) in tRNA + dimethylallyl diphosphate = N(6)-dimethylallyladenosine(37) in tRNA + diphosphate. Its function is as follows. Catalyzes the transfer of a dimethylallyl group onto the adenine at position 37 in tRNAs that read codons beginning with uridine, leading to the formation of N6-(dimethylallyl)adenosine (i(6)A). This chain is tRNA dimethylallyltransferase, found in Paracoccus denitrificans (strain Pd 1222).